Here is a 380-residue protein sequence, read N- to C-terminus: Cytochrome b (380 aa).

4 helical membrane-spanning segments follow: residues 34 to 54, 78 to 99, 114 to 134, and 179 to 199; these read FGSLLGICLLTQIMTGLLLAT, WLIRNLHANGASFFFICIYLHI, WNTGIILLLTLMATAFVGYVL, and FFALHFLLPFLIAGLTLIHLT. Heme b-binding residues include histidine 84 and histidine 98. Histidine 183 and histidine 197 together coordinate heme b. Histidine 202 is a binding site for a ubiquinone. Transmembrane regions (helical) follow at residues 227–247, 289–309, 321–341, and 348–368; these read LKDILGFMLMLLPLTTLALFS, LGGVLALAASVLILFLIPFLH, ISQLLFWTLVANLLILTWIGS, and FIIIGQLASLTYFLILLALFP.

This sequence belongs to the cytochrome b family. The cytochrome bc1 complex contains 11 subunits: 3 respiratory subunits (MT-CYB, CYC1 and UQCRFS1), 2 core proteins (UQCRC1 and UQCRC2) and 6 low-molecular weight proteins (UQCRH/QCR6, UQCRB/QCR7, UQCRQ/QCR8, UQCR10/QCR9, UQCR11/QCR10 and a cleavage product of UQCRFS1). This cytochrome bc1 complex then forms a dimer. The cofactor is heme b.

It localises to the mitochondrion inner membrane. In terms of biological role, component of the ubiquinol-cytochrome c reductase complex (complex III or cytochrome b-c1 complex) that is part of the mitochondrial respiratory chain. The b-c1 complex mediates electron transfer from ubiquinol to cytochrome c. Contributes to the generation of a proton gradient across the mitochondrial membrane that is then used for ATP synthesis. The polypeptide is Cytochrome b (MT-CYB) (Buteo buteo (Eurasian buzzard)).